The sequence spans 348 residues: MAVTRAKIALDAMGGDYAPEEIVIGAIRASQELDVDIFLVGDRQAIEDCLNRHPHQGINLTIVDAEGVVEMEEDAVVVRRKPKASINVAMNLVKEKQADAVVSAGHSGAAMAAALLRLGRLKGIDRPAIGTLFPTMVPGKSVIVLDVGANVDCKPKYLEQFALMGTVYSQYVLGVDSPKVGLLNIGEESNKGNTLALQTHELLQSNPEIPFVGNAEGRDVLSGNFDVIVCDGFVGNIVLKFAEAVGEILLSIVKEELPRGWRGKLGAIILAPNLKRIKQRVDHAEHGGALLFGVDGVCVISHGSSRSGSIFNAIRLAKEAIDNQVSVRINSSTSLLMERQKTEELQNI.

The protein belongs to the PlsX family. In terms of assembly, homodimer. Probably interacts with PlsY.

The protein resides in the cytoplasm. It catalyses the reaction a fatty acyl-[ACP] + phosphate = an acyl phosphate + holo-[ACP]. Its pathway is lipid metabolism; phospholipid metabolism. Functionally, catalyzes the reversible formation of acyl-phosphate (acyl-PO(4)) from acyl-[acyl-carrier-protein] (acyl-ACP). This enzyme utilizes acyl-ACP as fatty acyl donor, but not acyl-CoA. This Synechocystis sp. (strain ATCC 27184 / PCC 6803 / Kazusa) protein is Phosphate acyltransferase.